A 533-amino-acid polypeptide reads, in one-letter code: Peptide chain release factor 3 (533 aa).

Positions 9-284 (ARRRTFAIIS…ALCELSPPPL (276 aa)) constitute a tr-type G domain. GTP-binding positions include 18 to 25 (SHPDAGKT), 95 to 99 (DTPGH), and 149 to 152 (NKLD).

It belongs to the TRAFAC class translation factor GTPase superfamily. Classic translation factor GTPase family. PrfC subfamily.

It localises to the cytoplasm. Its function is as follows. Increases the formation of ribosomal termination complexes and stimulates activities of RF-1 and RF-2. It binds guanine nucleotides and has strong preference for UGA stop codons. It may interact directly with the ribosome. The stimulation of RF-1 and RF-2 is significantly reduced by GTP and GDP, but not by GMP. This is Peptide chain release factor 3 from Cupriavidus taiwanensis (strain DSM 17343 / BCRC 17206 / CCUG 44338 / CIP 107171 / LMG 19424 / R1) (Ralstonia taiwanensis (strain LMG 19424)).